Consider the following 342-residue polypeptide: Ribosomal RNA small subunit methyltransferase C (342 aa).

The protein belongs to the methyltransferase superfamily. RsmC family. As to quaternary structure, monomer.

Its subcellular location is the cytoplasm. It catalyses the reaction guanosine(1207) in 16S rRNA + S-adenosyl-L-methionine = N(2)-methylguanosine(1207) in 16S rRNA + S-adenosyl-L-homocysteine + H(+). In terms of biological role, specifically methylates the guanine in position 1207 of 16S rRNA in the 30S particle. This is Ribosomal RNA small subunit methyltransferase C from Shewanella loihica (strain ATCC BAA-1088 / PV-4).